The sequence spans 403 residues: MHSFKRSLLLLGALLPAVFGAPVEPRRAAEKVPGKYIVTFKSGLNVDQIDAHTSWASNVHKRNLERRGLAERDQYSGIEKNYKINKFAAYSGSFDDATIEEIRNSADVAHVEEDQIWYIDALTSQSGAPWGLGAISHKGEASTTYVYDTSAGEGTYAYVVDTGINADHEEFGGRASLAYNAVGGQHVDSVGHGTHVAGTIGGETYGVSKKANLLSVKVFQGESSSTSIILDGFNWAANDIVSKGRTGKSAINMSLGGGYSYAFNQAVEDAYDEGVLSVVAAGNDNIDASDSSPASAPNALTVAASTKSNTRASFSNYGSVVDIFAPGQDILSAWIGSTTATNTISGTSMATPHVVGLSLYLIALEGLSSASAVVSRIKELATQGVLSNVQGSPNLLAYNGADE.

An N-terminal signal peptide occupies residues methionine 1 to alanine 21. Positions proline 22–serine 124 are excised as a propeptide. The Inhibitor I9 domain maps to lysine 35 to isoleucine 119. A Peptidase S8 domain is found at proline 129 to glutamate 403. Active-site charge relay system residues include aspartate 161 and histidine 192. N-linked (GlcNAc...) asparagine glycosylation is present at asparagine 252. Serine 348 serves as the catalytic Charge relay system.

Belongs to the peptidase S8 family.

It localises to the secreted. It carries out the reaction Hydrolysis of proteins with broad specificity, and of Bz-Arg-OEt &gt; Ac-Tyr-OEt. Does not hydrolyze peptide amides.. In terms of biological role, secreted alkaline protease that allows assimilation of proteinaceous substrates. The chain is Alkaline protease 1 (alp1) from Emericella nidulans (strain FGSC A4 / ATCC 38163 / CBS 112.46 / NRRL 194 / M139) (Aspergillus nidulans).